The primary structure comprises 136 residues: Protein PsiE (136 aa).

The next 4 helical transmembrane spans lie at Ile-15–Leu-35, Tyr-55–Val-75, His-83–Val-103, and Pro-108–Cys-128.

Belongs to the PsiE family.

Its subcellular location is the cell inner membrane. The protein is Protein PsiE of Salmonella gallinarum (strain 287/91 / NCTC 13346).